A 952-amino-acid chain; its full sequence is Respiratory burst oxidase homolog protein E (952 aa).

Over 1–392 the chain is Cytoplasmic; it reads MKLSPLSFST…QCLILDNWQR (392 aa). EF-hand-like stretches follow at residues 211–219 and 245–256; these read SKNGLLARD and RRQKLEKITKDE. 2 EF-hand domains span residues 268-303 and 312-347; these read SFDA…SASA and QAEE…RDAY. Residues Asp281, Asn283, Asp285, Lys287, and Glu292 each coordinate Ca(2+). Residues 393–413 form a helical membrane-spanning segment; that stretch reads SWVLLVWVMLMAILFVWKFLE. At 414-475 the chain is on the extracellular side; that stretch reads YREKAAFKVM…PFDDNINFHK (62 aa). Residues 431–587 form the Ferric oxidoreductase domain; the sequence is KGAAETLKLN…LLVVVYIMLI (157 aa). A helical membrane pass occupies residues 476–496; it reads IIACAIAIGILVHAGTHLACD. Topologically, residues 497 to 531 are cytoplasmic; it reads FPRIINSSPEQFVLIASAFNGTKPTFKDLMTGAEG. The helical transmembrane segment at 532 to 552 threads the bilayer; that stretch reads ITGISMVILTTIAFTLASTHF. Topologically, residues 553-574 are extracellular; the sequence is RRNRVRLPAPLDRLTGFNAFWY. The helical transmembrane segment at 575–595 threads the bilayer; that stretch reads THHLLVVVYIMLIVHGTFLFF. Residues 596-603 are Cytoplasmic-facing; that stretch reads ADKWYQKT. Residues 604–621 traverse the membrane as a helical segment; it reads TWMYISVPLVLYVAERSL. The Extracellular segment spans residues 622 to 750; that stretch reads RACRSKHYSV…PYGAPAQDYR (129 aa). In terms of domain architecture, FAD-binding FR-type spans 626–748; that stretch reads SKHYSVKILK…DGPYGAPAQD (123 aa). The helical transmembrane segment at 751-771 threads the bilayer; sequence SYDVLLLIGLGIGATPFISIL. Over 772 to 952 the chain is Cytoplasmic; sequence KDLLNNSRDE…TRFEFHKEHF (181 aa).

This sequence belongs to the RBOH (TC 5.B.1.3) family. In terms of assembly, monomer and homodimer. In terms of tissue distribution, expressed in roots, inflorescences, leaves and stems.

It localises to the membrane. Functionally, calcium-dependent NADPH oxidase that generates superoxide. This chain is Respiratory burst oxidase homolog protein E (RBOHE), found in Arabidopsis thaliana (Mouse-ear cress).